A 267-amino-acid chain; its full sequence is uncharacterized protein (267 aa).

It to S.pombe SpAC18G6.12c.

This is an uncharacterized protein from Schizosaccharomyces pombe (strain 972 / ATCC 24843) (Fission yeast).